The primary structure comprises 285 residues: MEMO1 family protein Igni_0992 (285 aa).

Belongs to the MEMO1 family.

In Ignicoccus hospitalis (strain KIN4/I / DSM 18386 / JCM 14125), this protein is MEMO1 family protein Igni_0992.